The primary structure comprises 208 residues: Ypt/Rab-type GTPase YPT7 (208 aa).

GTP-binding positions include 17–23, 33–40, glycine 67, and 126–129; these read SGVGKTS, YSQQYKAT, and NKID. The short motif at 37–45 is the Effector region element; the sequence is YKATIGADF. A Glycyl lysine isopeptide (Lys-Gly) (interchain with G-Cter in ubiquitin) cross-link involves residue lysine 147. 158-160 provides a ligand contact to GTP; the sequence is SAK. S-geranylgeranyl cysteine attachment occurs at residues cysteine 206 and cysteine 208. Cysteine methyl ester is present on cysteine 208.

This sequence belongs to the small GTPase superfamily. Rab family. As to quaternary structure, interacts with IVY1. Interacts with YIF1, YIP4 and YIP5. Interacts with the HOPS complex. Interacts with the class C-Vps complex. Interacts with VPS35. Interacts with VPS39. Interacts with the GDP dissociation inhibitor GDI1. Interacts with CCZ1.

The protein resides in the late endosome. It localises to the vacuole membrane. With respect to regulation, rab activation is generally mediated by a guanine exchange factor (GEF), while inactivation through hydrolysis of bound GTP is catalyzed by a GTPase activating protein (GAP). YPT7 is activated by GEFs MON1-CCZ1 complex (MC1) and VAM6/VPS39, and inactivated by GAPs GYP7 and GYP1. In terms of biological role, ypt/Rab-type GTPases are key regulators of membrane trafficking and intracellular vesicular transport. They act as molecular switches that convert between GTP-bound and GDP-bound states, and regulate virtually all steps of membrane traffic from the formation of the transport vesicle at the donor membrane to its fusion at the target membrane. In the GDP-bound state, Ypt proteins are predominantly cytosolic, solubilized through the interaction with a GDP dissociation inhibitor (GDI). In the GTP-bound state, the proteins are membrane bound and interact with specific effector proteins that select cargo, promote vesicle movement, or verify the correct site of fusion. Involved in regulation of vesicular protein transport in exo- and endocytosis. Involved in regulation of late endosome to vacuole trafficking and homotypic vacuole fusion, by interacting in its GTP-bound state on the donor membrane with the large multiprotein HOPS/class C-Vps tethering complex on the acceptor membrane. Involved in retromer assembly and cargo export, recognizing the cargo selection complex (CSC). GTP-bound YPT7 recruits CSC to vacuolar membranes via retromer subunit VPS35. Interacts with the HOPS complex subunit VPS39 independent of the HOPS complex at mitochondria-vacuole contact sites (vCLAMPs), providing a physical and metabolic interconnection between the endocytic pathway and mitochondria. In Saccharomyces cerevisiae (strain ATCC 204508 / S288c) (Baker's yeast), this protein is Ypt/Rab-type GTPase YPT7 (YPT7).